The following is a 112-amino-acid chain: METVLQVLLGILGFQAAWVSSQELEQSPQSLIVQEGKNLTINCTSSKTLYGLYWYKQKYGEGLIFLMMLQKGGEEKSHEKITAKLDEKKQQSSLHITASQPSHAGIYLCGAD.

The first 21 residues, 1–21 (METVLQVLLGILGFQAAWVSS), serve as a signal peptide directing secretion. The 91-residue stretch at 22-112 (QELEQSPQSL…HAGIYLCGAD (91 aa)) folds into the Ig-like domain. Residues N38 and N42 are each glycosylated (N-linked (GlcNAc...) asparagine). The cysteines at positions 43 and 109 are disulfide-linked.

Alpha-beta TR is a heterodimer composed of an alpha and beta chain; disulfide-linked. The alpha-beta TR is associated with the transmembrane signaling CD3 coreceptor proteins to form the TR-CD3 (TcR or TCR). The assembly of alpha-beta TR heterodimers with CD3 occurs in the endoplasmic reticulum where a single alpha-beta TR heterodimer associates with one CD3D-CD3E heterodimer, one CD3G-CD3E heterodimer and one CD247 homodimer forming a stable octameric structure. CD3D-CD3E and CD3G-CD3E heterodimers preferentially associate with TR alpha and TR beta chains, respectively. The association of the CD247 homodimer is the last step of TcR assembly in the endoplasmic reticulum and is required for transport to the cell surface.

It localises to the cell membrane. V region of the variable domain of T cell receptor (TR) alpha chain that participates in the antigen recognition. Alpha-beta T cell receptors are antigen specific receptors which are essential to the immune response and are present on the cell surface of T lymphocytes. Recognize peptide-major histocompatibility (MH) (pMH) complexes that are displayed by antigen presenting cells (APC), a prerequisite for efficient T cell adaptive immunity against pathogens. Binding of alpha-beta TR to pMH complex initiates TR-CD3 clustering on the cell surface and intracellular activation of LCK that phosphorylates the ITAM motifs of CD3G, CD3D, CD3E and CD247 enabling the recruitment of ZAP70. In turn ZAP70 phosphorylates LAT, which recruits numerous signaling molecules to form the LAT signalosome. The LAT signalosome propagates signal branching to three major signaling pathways, the calcium, the mitogen-activated protein kinase (MAPK) kinase and the nuclear factor NF-kappa-B (NF-kB) pathways, leading to the mobilization of transcription factors that are critical for gene expression and essential for T cell growth and differentiation. The T cell repertoire is generated in the thymus, by V-(D)-J rearrangement. This repertoire is then shaped by intrathymic selection events to generate a peripheral T cell pool of self-MH restricted, non-autoaggressive T cells. Post-thymic interaction of alpha-beta TR with the pMH complexes shapes TR structural and functional avidity. In Homo sapiens (Human), this protein is T cell receptor alpha variable 34.